A 488-amino-acid chain; its full sequence is Glutamyl-tRNA(Gln) amidotransferase subunit A (488 aa).

Active-site charge relay system residues include Lys-77 and Ser-152. The active-site Acyl-ester intermediate is the Ser-176.

This sequence belongs to the amidase family. GatA subfamily. In terms of assembly, heterotrimer of A, B and C subunits.

It carries out the reaction L-glutamyl-tRNA(Gln) + L-glutamine + ATP + H2O = L-glutaminyl-tRNA(Gln) + L-glutamate + ADP + phosphate + H(+). Functionally, allows the formation of correctly charged Gln-tRNA(Gln) through the transamidation of misacylated Glu-tRNA(Gln) in organisms which lack glutaminyl-tRNA synthetase. The reaction takes place in the presence of glutamine and ATP through an activated gamma-phospho-Glu-tRNA(Gln). The sequence is that of Glutamyl-tRNA(Gln) amidotransferase subunit A from Streptococcus pyogenes serotype M3 (strain ATCC BAA-595 / MGAS315).